The sequence spans 151 residues: Large ribosomal subunit protein bL9 (151 aa).

This sequence belongs to the bacterial ribosomal protein bL9 family.

Binds to the 23S rRNA. This chain is Large ribosomal subunit protein bL9, found in Mycolicibacterium gilvum (strain PYR-GCK) (Mycobacterium gilvum (strain PYR-GCK)).